The chain runs to 515 residues: FAD-dependent oxidoreductase domain-containing protein 1 homolog (515 aa).

Residues 18–37 (AGATSNGSGSSGGDKSGEDL) are disordered. The chain crosses the membrane as a helical span at residues 100 to 116 (VLIIGGGGVGSSIAYWL).

In terms of assembly, associates with mitochondrial complex I assembly intermediates during its biogenesis. Requires FAD as cofactor.

The protein resides in the mitochondrion inner membrane. Functionally, involved in the assembly of the mitochondrial membrane respiratory chain NADH dehydrogenase (Complex I). This Drosophila melanogaster (Fruit fly) protein is FAD-dependent oxidoreductase domain-containing protein 1 homolog.